We begin with the raw amino-acid sequence, 892 residues long: Alanine--tRNA ligase (892 aa).

Zn(2+) is bound by residues His594, His598, Cys702, and His706.

This sequence belongs to the class-II aminoacyl-tRNA synthetase family. The cofactor is Zn(2+).

The protein resides in the cytoplasm. The catalysed reaction is tRNA(Ala) + L-alanine + ATP = L-alanyl-tRNA(Ala) + AMP + diphosphate. Functionally, catalyzes the attachment of alanine to tRNA(Ala) in a two-step reaction: alanine is first activated by ATP to form Ala-AMP and then transferred to the acceptor end of tRNA(Ala). Also edits incorrectly charged Ser-tRNA(Ala) and Gly-tRNA(Ala) via its editing domain. The sequence is that of Alanine--tRNA ligase from Pyrobaculum arsenaticum (strain DSM 13514 / JCM 11321 / PZ6).